Consider the following 879-residue polypeptide: Alanine--tRNA ligase (879 aa).

Histidine 566, histidine 570, cysteine 668, and histidine 672 together coordinate Zn(2+).

This sequence belongs to the class-II aminoacyl-tRNA synthetase family. The cofactor is Zn(2+).

Its subcellular location is the cytoplasm. It carries out the reaction tRNA(Ala) + L-alanine + ATP = L-alanyl-tRNA(Ala) + AMP + diphosphate. Its function is as follows. Catalyzes the attachment of alanine to tRNA(Ala) in a two-step reaction: alanine is first activated by ATP to form Ala-AMP and then transferred to the acceptor end of tRNA(Ala). Also edits incorrectly charged Ser-tRNA(Ala) and Gly-tRNA(Ala) via its editing domain. This Clostridium botulinum (strain Hall / ATCC 3502 / NCTC 13319 / Type A) protein is Alanine--tRNA ligase.